The chain runs to 257 residues: Probable enoyl-CoA hydratase (257 aa).

Belongs to the enoyl-CoA hydratase/isomerase family.

It carries out the reaction a (3S)-3-hydroxyacyl-CoA = a (2E)-enoyl-CoA + H2O. The enzyme catalyses a 4-saturated-(3S)-3-hydroxyacyl-CoA = a (3E)-enoyl-CoA + H2O. Its function is as follows. Could possibly oxidize fatty acids using specific components. This Rhizobium meliloti (strain 1021) (Ensifer meliloti) protein is Probable enoyl-CoA hydratase (fadB1).